The sequence spans 219 residues: Glucagon-2 (219 aa).

Residues 1–20 (MKSTCYMIGILLLILQNTYQ) form the signal peptide. Propeptides lie at residues 21-50 (SPVP…LKEV), 84-95 (SGGLSRRNADYE), 136-140 (NAEIE), 175-178 (IRYS), and 213-219 (KDLLEEH). The disordered stretch occupies residues 23–43 (VPEADGSSRSVKAARNEAVDD).

Belongs to the glucagon family.

It localises to the secreted. Promotes hydrolysis of glycogen and lipids, and raises the blood sugar level. This Xenopus laevis (African clawed frog) protein is Glucagon-2 (gcg2).